The primary structure comprises 409 residues: Putative fatty acyl-CoA reductase 7 (409 aa).

This sequence belongs to the fatty acyl-CoA reductase family.

The protein is Putative fatty acyl-CoA reductase 7 (FAR7) of Arabidopsis thaliana (Mouse-ear cress).